Here is a 35-residue protein sequence, read N- to C-terminus: Antimicrobial peptide 3 (35 aa).

The Chitin-binding type-1 domain maps to 4-35; sequence GGECGGRFGGCAGGQCCSRFGFCGSGPKYCAH. 3 cysteine pairs are disulfide-bonded: Cys7-Cys20, Cys14-Cys26, and Cys19-Cys33.

Post-translationally, contains 3 disulfide bonds. Expressed in leaf, flower, stem and seed with highest expression in leaf (at protein level).

Has antifungal activity against A.niger (IC(50)=5.4 uM), B.sorokiniana (IC(50)=2.0 uM), B.cinerea (IC(50)=1.6 uM), F.solani (IC(50)=3.7 uM) and A.alternata (IC(50)=5.0 uM). Binds chitin in vitro. Has no antibacterial activity at concentrations up to 10 uM. This is Antimicrobial peptide 3 from Stellaria media (Common chickweed).